A 297-amino-acid chain; its full sequence is PIH1 domain-containing protein 1 (297 aa).

This sequence belongs to the PIH1 family.

It localises to the nucleus. In terms of biological role, involved in the assembly of C/D box small nucleolar ribonucleoprotein (snoRNP) particles. Recruits the SWI/SNF complex to the core promoter of rRNA genes and enhances pre-rRNA transcription. Mediates interaction of TELO2 with the R2TP complex which is necessary for the stability of MTOR and SMG1. Positively regulates the assembly and activity of the mTORC1 complex. The chain is PIH1 domain-containing protein 1 (pih1d1) from Xenopus laevis (African clawed frog).